The primary structure comprises 533 residues: Phosphatidylinositol 4-kinase gamma 8 (533 aa).

Positions G101 to D397 constitute a PI3K/PI4K catalytic domain. The tract at residues L107 to G113 is G-loop. ATP-binding positions include P108–A114, K129, and Q210–V213. A catalytic loop region spans residues L243–N251. The tract at residues P276–V302 is activation loop. Residue D278 coordinates ATP.

It belongs to the PI3/PI4-kinase family. Type II PI4K subfamily.

It catalyses the reaction a 1,2-diacyl-sn-glycero-3-phospho-(1D-myo-inositol) + ATP = a 1,2-diacyl-sn-glycero-3-phospho-(1D-myo-inositol 4-phosphate) + ADP + H(+). Functionally, the phosphorylation of phosphatidylinositol (PI) to PI4P is the first committed step in the generation of phosphatidylinositol 4,5-bisphosphate (PIP2), a precursor of the second messenger inositol 1,4,5-trisphosphate (InsP3). In Arabidopsis thaliana (Mouse-ear cress), this protein is Phosphatidylinositol 4-kinase gamma 8 (PI4KG8).